The chain runs to 846 residues: Leucine--tRNA ligase (846 aa).

The 'HIGH' region motif lies at P42–H52. Positions K586–S590 match the 'KMSKS' region motif. K589 serves as a coordination point for ATP.

This sequence belongs to the class-I aminoacyl-tRNA synthetase family.

The protein resides in the cytoplasm. The catalysed reaction is tRNA(Leu) + L-leucine + ATP = L-leucyl-tRNA(Leu) + AMP + diphosphate. This chain is Leucine--tRNA ligase, found in Heliobacterium modesticaldum (strain ATCC 51547 / Ice1).